A 197-amino-acid polypeptide reads, in one-letter code: CASP-like protein 1B2 (197 aa).

Ala-2 carries the post-translational modification N-acetylalanine. Residues 2 to 17 (AREKIVVAGGTTKSWK) are Cytoplasmic-facing. A helical transmembrane segment spans residues 18-38 (LLLGLRIFAFMATLAAAIVMS). At 39–69 (LNKETKTLVVATIGTVPIKATLTAKFQHTPA) the chain is on the extracellular side. The helical transmembrane segment at 70–90 (FVFFVIANVMVSFHNLLMIVV) threads the bilayer. The Cytoplasmic segment spans residues 91-106 (QIFSRKLEYKGLRLLS). The helical transmembrane segment at 107–127 (IAILDMLNATLVSAAANAAVF) threads the bilayer. The Extracellular segment spans residues 128 to 156 (VAELGKNGNKHAKWNKVCDRFTTYCDHGA). Residues 157–177 (GAIIAAFAGVILMLLVSAVSI) traverse the membrane as a helical segment. Residues 178–197 (SRLLINSKNFSTTATTTSVV) are Cytoplasmic-facing.

The protein belongs to the Casparian strip membrane proteins (CASP) family. In terms of assembly, homodimer and heterodimers.

The protein resides in the cell membrane. The sequence is that of CASP-like protein 1B2 from Arabidopsis thaliana (Mouse-ear cress).